The following is a 656-amino-acid chain: Leucine-rich repeat-containing protein 43 (656 aa).

Acidic residues predominate over residues 1–13 (MEASYESESESES). The disordered stretch occupies residues 1–25 (MEASYESESESESEAGPGTQRPGTG). LRR repeat units lie at residues 150-170 (KLEELVLSANRIKEVDATNLP), 172-193 (TLKVLELYGNEISSMECLCAHP), 196-215 (GLQHLGLGHNKLLGPLESLY), and 223-244 (NLVSLDLGFNDLTDLQSMVTSL). The 39-residue stretch at 258–296 (NPLALVPYYRGLTIDSLAQLCVLDDITVSPNEKHLFRGL) folds into the LRRCT domain. The interval 512–554 (LSAKKGKGEKDKKGKEKDRTGKGEKEPAKEWKVLKKKKEPPKE) is disordered. Residues 517-544 (GKGEKDKKGKEKDRTGKGEKEPAKEWKV) are compositionally biased toward basic and acidic residues.

This is Leucine-rich repeat-containing protein 43 (LRRC43) from Homo sapiens (Human).